We begin with the raw amino-acid sequence, 581 residues long: Pre-mRNA 3'-end-processing factor FIP1 (581 aa).

Composition is skewed to basic and acidic residues over residues 1–10 and 32–42; these read MSAGEVERLV and VHVHSDLAKDL. Disordered regions lie at residues 1 to 95, 211 to 282, and 320 to 581; these read MSAG…EDDV, TVQQ…ESPD, and RSAT…APAE. Positions 1–110 are sufficient for interaction with PAPOLA; that stretch reads MSAGEVERLV…DIKTGAPQYG (110 aa). The interval 1–332 is necessary for stimulating PAPOLA activity; that stretch reads MSAGEVERLV…TEVDNNFSKP (332 aa). Acidic residues-rich tracts occupy residues 43–54 and 80–94; these read DENEVERPEEEN and TEDD…DEDD. Phosphoserine is present on residues serine 84, serine 86, and serine 88. The interval 136–219 is sufficient for interaction with CPSF4; it reads KGVDLDAPGS…ITVQQGRTGN (84 aa). The span at 247–267 shows a compositional bias: low complexity; it reads SRNSTSSQSQTSTASRKASSS. Residues 271–282 are compositionally biased toward basic and acidic residues; the sequence is WQDRYGRAESPD. A Phosphoserine modification is found at serine 280. Residues 320–330 are compositionally biased toward polar residues; the sequence is RSATEVDNNFS. The span at 331–389 shows a compositional bias: pro residues; sequence KPPPFFPPGAPPTHLPPPPFLPPPPTVSTAPPLIPPPGIPITVPPPGFPPPPGAPPPSL. Tyrosine 411 bears the Phosphotyrosine mark. Polar residues predominate over residues 419–435; sequence LTSSAPSWPSLVDTTKQ. The tract at residues 428–581 is sufficient for interaction with CPSF1 and CSTF3; that stretch reads SLVDTTKQWD…QESTEAAPAE (154 aa). Positions 439–479 are enriched in basic and acidic residues; that stretch reads YARREKDRDRDRERDRDRERERDRDRERERTRERERERDHS. An arg/Asp/Glu-rich domain region spans residues 442-477; that stretch reads REKDRDRDRERDRDRERERDRDRERERTRERERERD. Residues 478 to 535 are sufficient for interaction with AHCYL1; that stretch reads HSPTPSVFNSDEERYRYREYAERGYERHRASREKEERHRERRHREKEETRHKSSRSNS. The residue at position 479 (serine 479) is a Phosphoserine. Phosphothreonine is present on threonine 481. Phosphoserine is present on residues serine 483 and serine 487. Residues 488-515 are compositionally biased toward basic and acidic residues; sequence DEERYRYREYAERGYERHRASREKEERH. The segment covering 529–538 has biased composition (basic residues); it reads KSSRSNSRRR. Serine 541 is subject to Phosphoserine. Residues 547–557 show a composition bias toward basic residues; it reads HRRHKHKKSKR.

The protein belongs to the FIP1 family. In terms of assembly, component of the cleavage and polyadenylation specificity factor (CPSF) complex, composed of CPSF1, CPSF2, CPSF3, CPSF4 and FIP1L1. Found in a complex with CPSF1, FIP1L1 and PAPOLA. Interacts with CPSF1, CPSF4, CSTF2 and CSTF3. Interacts with AHCYL1 (when phosphorylated); the interaction is direct and associates AHCYL1 with the CPSF complex and RNA. Interacts with PAPOLA; the interaction seems to be increased by the interaction with AHCYL1. Interacts with NUDT21/CPSF5; this interaction occurs in a RNA sequence-specific manner. Interacts (preferentially via unphosphorylated form and Arg/Glu/Asp-rich domain) with CPSF6 (via Arg/Ser-rich domain); this interaction mediates, at least in part, the interaction between the CFIm and CPSF complexes and may be inhibited by CPSF6 hyper-phosphorylation. Interacts (preferentially via unphosphorylated form and Arg/Asp/Glu-rich domain) with CPSF7 (via Arg/Ser-rich domain); this interaction mediates, at least in part, the interaction between the CFIm and CPSF complexes and may be inhibited by CPSF7 hyper-phosphorylation.

It is found in the nucleus. In terms of biological role, component of the cleavage and polyadenylation specificity factor (CPSF) complex that plays a key role in pre-mRNA 3'-end formation, recognizing the AAUAAA signal sequence and interacting with poly(A) polymerase and other factors to bring about cleavage and poly(A) addition. FIP1L1 contributes to poly(A) site recognition and stimulates poly(A) addition. Binds to U-rich RNA sequence elements surrounding the poly(A) site. May act to tether poly(A) polymerase to the CPSF complex. This Mus musculus (Mouse) protein is Pre-mRNA 3'-end-processing factor FIP1 (Fip1l1).